The chain runs to 308 residues: MEWKGRDVISIRDFSKEDIEVVLSTAERLEKEMKEKGQLEYAKGKILATLFFEPSTRTRLSFESAMHRLGGSVIGFAEASTSSVKKGESLRDTIKTVEQYSDVIVIRHPKEGAARLAAEVADIPVINAGDGSNQHPTQTLLDLYTIKKEFGTIDGLKIGLLGDLKYGRTVHSLAEALAFYDVELYLISPELLRMPKHIVEELRERGMKIVETTKLEEVIGELDVLYVTRIQKERFPDEQEYLKVKGSYQVNLKILENVKDSLRIMHPLPRVDEIHPEVDKTKHAIYFKQVFNGVPVRMALLALVLGVI.

Arginine 57 and threonine 58 together coordinate carbamoyl phosphate. Lysine 86 serves as a coordination point for L-aspartate. Carbamoyl phosphate is bound by residues arginine 107, histidine 135, and glutamine 138. L-aspartate-binding residues include arginine 168 and arginine 229. Carbamoyl phosphate is bound by residues leucine 268 and proline 269.

Belongs to the aspartate/ornithine carbamoyltransferase superfamily. ATCase family. In terms of assembly, heterooligomer of catalytic and regulatory chains.

The catalysed reaction is carbamoyl phosphate + L-aspartate = N-carbamoyl-L-aspartate + phosphate + H(+). It functions in the pathway pyrimidine metabolism; UMP biosynthesis via de novo pathway; (S)-dihydroorotate from bicarbonate: step 2/3. In terms of biological role, catalyzes the condensation of carbamoyl phosphate and aspartate to form carbamoyl aspartate and inorganic phosphate, the committed step in the de novo pyrimidine nucleotide biosynthesis pathway. The sequence is that of Aspartate carbamoyltransferase catalytic subunit from Pyrococcus horikoshii (strain ATCC 700860 / DSM 12428 / JCM 9974 / NBRC 100139 / OT-3).